The following is a 104-amino-acid chain: Ribonuclease P protein component 4 (104 aa).

Cys57, Cys60, Cys83, and Cys86 together coordinate Zn(2+).

Belongs to the eukaryotic/archaeal RNase P protein component 4 family. In terms of assembly, consists of a catalytic RNA component and at least 4-5 protein subunits. Requires Zn(2+) as cofactor.

The protein localises to the cytoplasm. The catalysed reaction is Endonucleolytic cleavage of RNA, removing 5'-extranucleotides from tRNA precursor.. Part of ribonuclease P, a protein complex that generates mature tRNA molecules by cleaving their 5'-ends. This chain is Ribonuclease P protein component 4, found in Saccharolobus islandicus (strain M.14.25 / Kamchatka #1) (Sulfolobus islandicus).